The chain runs to 148 residues: Putative nickel-responsive regulator (148 aa).

4 residues coordinate Ni(2+): histidine 88, histidine 99, histidine 101, and cysteine 107.

It belongs to the transcriptional regulatory CopG/NikR family. Ni(2+) is required as a cofactor.

In terms of biological role, transcriptional regulator. This Helicobacter pylori (strain HPAG1) protein is Putative nickel-responsive regulator.